Here is a 307-residue protein sequence, read N- to C-terminus: MSSTPIKHYLQFSDLTPDEYEYLLDRARILKAKFKNYETWHPLHDRTLAMIFEKNSTRTRLSFEAGIHQLGGHAVFLNTRDSQLGRGEPIEDAAQVISRMVDIIMIRTFGQDIIERFAAHSRVPVINGLTNEYHPCQVLADVFTYIEQRGSIRGKTVAWIGDANNMAYTWIQAAERLGFTFHFSAPPGYQLDPALVPASAAGQLKVFEDPLAACKGASLVTTDVWTSMGFEAENEARKRAFQNWMVTTAMMDRAEPDALFMHCLPAHRGEEVEAAVIDGPKSVVWDEAENRLHVQKALMEYLLCGRY.

Carbamoyl phosphate contacts are provided by residues 56–59 (STRT), Gln83, Arg107, and 134–137 (HPCQ). Residues Asn165, Asp223, and 227 to 228 (SM) each bind L-ornithine. Residues 263 to 264 (CL) and Arg291 each bind carbamoyl phosphate.

This sequence belongs to the aspartate/ornithine carbamoyltransferase superfamily. OTCase family.

The protein resides in the cytoplasm. The enzyme catalyses carbamoyl phosphate + L-ornithine = L-citrulline + phosphate + H(+). Its pathway is amino-acid biosynthesis; L-arginine biosynthesis; L-arginine from L-ornithine and carbamoyl phosphate: step 1/3. Functionally, reversibly catalyzes the transfer of the carbamoyl group from carbamoyl phosphate (CP) to the N(epsilon) atom of ornithine (ORN) to produce L-citrulline. The polypeptide is Ornithine carbamoyltransferase (Cupriavidus pinatubonensis (strain JMP 134 / LMG 1197) (Cupriavidus necator (strain JMP 134))).